The primary structure comprises 108 residues: MDSSLSQKFTLAYASLLGVGGLMGYLKRGSKISLVAGGGSAALFYYVYTELPGNPVLASSIGIVGSAALTGMMGSRYLRTRKVVPAGLVSVVSLVMTGAYLHGLIRSS.

3 helical membrane passes run 32–52, 55–75, and 85–105; these read ISLV…TELP, PVLA…MMGS, and PAGL…HGLI.

It belongs to the TMEM14 family.

The protein resides in the membrane. Functionally, may be involved in free fatty acids export. The chain is Protein FATTY ACID EXPORT 7 from Arabidopsis thaliana (Mouse-ear cress).